We begin with the raw amino-acid sequence, 710 residues long: MRYIVSPQLVLQVGKGQEVERALYLTPYDYIDEKSPIYYFLRSHLNIQQPEIVKRHILLTLRMTQLKGYLGNLLDIKDDIIIYSHKNNLEYSYVDNTIFNPFVYTQKKTLLKNDSFLYNVYPGACDFLVIWVARACDTSIPEFGSYEDVDNNIIKFETMLMEVFPQLDLDITVESKFNNIFRTNLKLTGLKKIIQRVQDLDINYKSLLSRYDEHFINMTGNHFILNDEQLNLSIWDLDGTLALSSDGDTVMINNVKLFTDLVSDIDTQMERIKGDITYKVHLATPINSRIKLDIETSFIFIETATNNILLSSDKKISIILAKNHISIKVKNHIPNIEKYFTFLVIAINAMFNSVQKSADFTKVETVYWSRICQNTKNKNRKPIIINYLDPGMKKISNNFYRSDEKEVFINDNGIMFTCMDPLGKYNKVGFLNIFHDMWKYCIPCCFLHDQSHRSTFSSCVHQIDVEKKIVSPYILNFGKVVTESKMSFLPIIFDAFLNDGMTANMEQDNKRLKETSGYHIVRCCAGDDIVRLRTTSDIIQFVNEDKNILIVNDMVYFPMNASDIGKKIHILIQEIVHEVMIVKKKESSDKIDFFPPNYKLLKDLFPKQTIQTPIQSDAGMVLTTDGFYIDGKLFNEDLSSKYVTFTKNVIASDAVAKYFSPLFKYVISEAKDRFIKTWMINIMIHMNVDPNNIIPTLEKYYPNSGRAQIN.

It belongs to the poxviridae VETF large subunit family. As to quaternary structure, heterodimer of a 70 kDa and a 82 kDa subunit. Part of the early transcription complex composed of ETF, RAP94/OPG109, and the DNA-directed RNA polymerase.

It localises to the virion. Its function is as follows. Acts with RNA polymerase to initiate transcription from early gene promoters. Is recruited by the RPO-associated protein of 94 kDa RAP94/OPG109 to form the early transcription complex, which also contains the core RNA polymerase. ETF heterodimer binds to early gene promoters. The chain is Early transcription factor 82 kDa subunit (OPG133) from Vaccinia virus (strain Ankara) (VACV).